The sequence spans 268 residues: Putative hydro-lyase ABAYE2440 (268 aa).

The protein belongs to the D-glutamate cyclase family.

This Acinetobacter baumannii (strain AYE) protein is Putative hydro-lyase ABAYE2440.